The chain runs to 406 residues: 3-phosphoshikimate 1-carboxyvinyltransferase (406 aa).

The 3-phosphoshikimate site is built by K20, S21, and R25. K20 provides a ligand contact to phosphoenolpyruvate. Phosphoenolpyruvate-binding residues include G84 and R112. 3-phosphoshikimate is bound by residues S155, S156, Q157, D295, Q317, and K321. Q157 provides a ligand contact to phosphoenolpyruvate. The active-site Proton acceptor is the D295. Phosphoenolpyruvate-binding residues include R325, R366, and K392.

It belongs to the EPSP synthase family. In terms of assembly, monomer.

Its subcellular location is the cytoplasm. The enzyme catalyses 3-phosphoshikimate + phosphoenolpyruvate = 5-O-(1-carboxyvinyl)-3-phosphoshikimate + phosphate. It functions in the pathway metabolic intermediate biosynthesis; chorismate biosynthesis. In terms of biological role, catalyzes the transfer of the enolpyruvyl moiety of phosphoenolpyruvate (PEP) to the 5-hydroxyl of shikimate-3-phosphate (S3P) to produce enolpyruvyl shikimate-3-phosphate and inorganic phosphate. The sequence is that of 3-phosphoshikimate 1-carboxyvinyltransferase from Pyrococcus furiosus (strain ATCC 43587 / DSM 3638 / JCM 8422 / Vc1).